The following is a 259-amino-acid chain: Large ribosomal subunit protein eL8 (259 aa).

The disordered stretch occupies residues 1–24; the sequence is MAPKSKKVAPSPFAQPKAAKTTKN. Ser11 and Ser33 each carry phosphoserine.

Belongs to the eukaryotic ribosomal protein eL8 family. As to quaternary structure, component of the large ribosomal subunit (LSU). Mature yeast ribosomes consist of a small (40S) and a large (60S) subunit. The 40S small subunit contains 1 molecule of ribosomal RNA (18S rRNA) and at least 33 different proteins. The large 60S subunit contains 3 rRNA molecules (25S, 5.8S and 5S rRNA) and at least 46 different proteins.

It localises to the cytoplasm. In terms of biological role, component of the ribosome, a large ribonucleoprotein complex responsible for the synthesis of proteins in the cell. The small ribosomal subunit (SSU) binds messenger RNAs (mRNAs) and translates the encoded message by selecting cognate aminoacyl-transfer RNA (tRNA) molecules. The large subunit (LSU) contains the ribosomal catalytic site termed the peptidyl transferase center (PTC), which catalyzes the formation of peptide bonds, thereby polymerizing the amino acids delivered by tRNAs into a polypeptide chain. The nascent polypeptides leave the ribosome through a tunnel in the LSU and interact with protein factors that function in enzymatic processing, targeting, and the membrane insertion of nascent chains at the exit of the ribosomal tunnel. In Schizosaccharomyces pombe (strain 972 / ATCC 24843) (Fission yeast), this protein is Large ribosomal subunit protein eL8 (rpl8).